The chain runs to 265 residues: Glutamate racemase (265 aa).

Residues Asp7–Ser8 and Tyr39–Gly40 contribute to the substrate site. The active-site Proton donor/acceptor is Cys71. Asn72–Thr73 is a substrate binding site. Catalysis depends on Cys184, which acts as the Proton donor/acceptor. Residue Thr185–His186 participates in substrate binding.

Belongs to the aspartate/glutamate racemases family.

It catalyses the reaction L-glutamate = D-glutamate. It functions in the pathway cell wall biogenesis; peptidoglycan biosynthesis. Its function is as follows. Provides the (R)-glutamate required for cell wall biosynthesis. The chain is Glutamate racemase from Sulfurovum sp. (strain NBC37-1).